Reading from the N-terminus, the 347-residue chain is Isocitrate dehydrogenase [NAD] subunit alpha, mitochondrial (347 aa).

The N-terminal 8 residues, 1 to 8 (QKQVTRGF), are a transit peptide targeting the mitochondrion. 14–42 (TVTLIPGDGIGPEISAAVMKIFDAAKAPI) lines the NAD(+) pocket. Position 58 is an N6-succinyllysine (Lys-58). At Thr-82 the chain carries Phosphothreonine. Substrate is bound by residues Arg-96, Arg-106, and Arg-127. An N6-acetyllysine modification is found at Lys-204. Positions 214, 238, and 242 each coordinate Mg(2+). The residue at position 324 (Lys-324) is an N6-acetyllysine; alternate. Lys-324 is subject to N6-succinyllysine; alternate. Residue Lys-331 is modified to N6-succinyllysine.

It belongs to the isocitrate and isopropylmalate dehydrogenases family. As to quaternary structure, heterooligomer of subunits alpha (IDH3A), beta (IDH3B), and gamma (IDH3G) in the apparent ratio of 2:1:1. The heterodimer containing one IDH3A and one IDH3B subunit and the heterodimer containing one IDH3A and one IDH3G subunit assemble into a heterotetramer (which contains two subunits of IDH3A, one of IDH3B and one of IDH3G) and further into the heterooctamer. Mg(2+) is required as a cofactor. Requires Mn(2+) as cofactor.

It localises to the mitochondrion. The enzyme catalyses D-threo-isocitrate + NAD(+) = 2-oxoglutarate + CO2 + NADH. With respect to regulation, the heterotetramer and the heterodimer composed of IDH3A and IDH3G subunits can be allosterically activated by citrate (CIT) or/and ADP, and the two activators can act independently or synergistically. The heterodimer composed of IDH3A and IDH3B subunits cannot be allosterically regulated and the allosteric regulation of the heterotetramer is through the IDH3G subunit and not the IDH3B subunit. The IDH3G subunit contains the allosteric site which consists of a CIT-binding site and an ADP-binding site, and the binding of CIT and ADP causes conformational changes at the allosteric site which are transmitted to the active site in the catalytic subunit (IDH3A) through a cascade of conformational changes at the heterodimer interface, leading to stabilization of the isocitrate-binding at the active site and thus activation of the enzyme. ATP can activate the heterotetramer and the heterodimer composed of IDH3A and IDH3G subunits at low concentrations but inhibits their activities at high concentrations, whereas ATP exhibits only inhibitory effect on the heterodimer composed of IDH3A and IDH3B subunits. Catalytic subunit of the enzyme which catalyzes the decarboxylation of isocitrate (ICT) into alpha-ketoglutarate. The heterodimer composed of the alpha (IDH3A) and beta (IDH3B) subunits and the heterodimer composed of the alpha (IDH3A) and gamma (IDH3G) subunits, have considerable basal activity but the full activity of the heterotetramer (containing two subunits of IDH3A, one of IDH3B and one of IDH3G) requires the assembly and cooperative function of both heterodimers. The protein is Isocitrate dehydrogenase [NAD] subunit alpha, mitochondrial (IDH3A) of Macaca fascicularis (Crab-eating macaque).